An 89-amino-acid chain; its full sequence is Small ribosomal subunit protein uS15 (89 aa).

Belongs to the universal ribosomal protein uS15 family. As to quaternary structure, part of the 30S ribosomal subunit. Forms a bridge to the 50S subunit in the 70S ribosome, contacting the 23S rRNA.

Its function is as follows. One of the primary rRNA binding proteins, it binds directly to 16S rRNA where it helps nucleate assembly of the platform of the 30S subunit by binding and bridging several RNA helices of the 16S rRNA. In terms of biological role, forms an intersubunit bridge (bridge B4) with the 23S rRNA of the 50S subunit in the ribosome. This chain is Small ribosomal subunit protein uS15, found in Oleidesulfovibrio alaskensis (strain ATCC BAA-1058 / DSM 17464 / G20) (Desulfovibrio alaskensis).